Here is a 1171-residue protein sequence, read N- to C-terminus: ATP-dependent helicase/deoxyribonuclease subunit B (1171 aa).

Residues 1-390 (MSLRFVIGRA…HPLVECIRSA (390 aa)) enclose the UvrD-like helicase ATP-binding domain. 8 to 15 (GRAGSGKS) contacts ATP. The UvrD-like helicase C-terminal domain maps to 281–587 (MEQPRFHSPA…QFANIPPSLD (307 aa)). [4Fe-4S] cluster contacts are provided by C805, C1129, C1132, and C1138.

It belongs to the helicase family. AddB/RexB type 1 subfamily. In terms of assembly, heterodimer of AddA and AddB. Mg(2+) is required as a cofactor. Requires [4Fe-4S] cluster as cofactor.

Its function is as follows. The heterodimer acts as both an ATP-dependent DNA helicase and an ATP-dependent, dual-direction single-stranded exonuclease. Recognizes the chi site generating a DNA molecule suitable for the initiation of homologous recombination. The AddB subunit has 5' -&gt; 3' nuclease activity but not helicase activity. This is ATP-dependent helicase/deoxyribonuclease subunit B from Bacillus cereus (strain B4264).